Here is a 641-residue protein sequence, read N- to C-terminus: UvrABC system protein C (641 aa).

Residues 16 to 95 (ESPGVYRFWD…IKQYEPRFNI (80 aa)) enclose the GIY-YIG domain. The region spanning 208-243 (TEYLRRLEKDMRAAAAAEDFERAARLRDDAAALRLA) is the UVR domain.

This sequence belongs to the UvrC family. In terms of assembly, interacts with UvrB in an incision complex.

It is found in the cytoplasm. Its function is as follows. The UvrABC repair system catalyzes the recognition and processing of DNA lesions. UvrC both incises the 5' and 3' sides of the lesion. The N-terminal half is responsible for the 3' incision and the C-terminal half is responsible for the 5' incision. The sequence is that of UvrABC system protein C from Acidothermus cellulolyticus (strain ATCC 43068 / DSM 8971 / 11B).